We begin with the raw amino-acid sequence, 1141 residues long: cGMP-inhibited 3',5'-cyclic phosphodiesterase 3A (1141 aa).

The disordered stretch occupies residues 1–42 (MAVPGDAARVRDKPVHSGVSQAPTAGRDCHHRADPASPRDSG). 6 helical membrane passes run 61–81 (LSSA…VRLV), 130–150 (LQPS…GLYL), 160–180 (AVAL…GLGV), 185–205 (LLSL…TWLV), 210–230 (LGVL…ISLE), and 232–252 (FKVA…ILLA). Ser-312 is modified (phosphoserine). Residues Ser-428 and Ser-438 each carry the phosphoserine; by PKA and PKC modification. Over residues 436–448 (RVSSTWTTTTSAT) the composition is skewed to low complexity. The segment at 436–482 (RVSSTWTTTTSATGLPTLEPAPVRRDRSTSIKLQEAPSSSPDSWNNP) is disordered. Polar residues predominate over residues 465-482 (SIKLQEAPSSSPDSWNNP). Phosphoserine is present on residues Ser-492, Ser-520, and Ser-524. The tract at residues 590-640 (RPYSQGNPADEPLERSGVATRTPSRTDDTAQVTSDYETNNNSDSSDIVQNE) is disordered. The span at 608–637 (ATRTPSRTDDTAQVTSDYETNNNSDSSDIV) shows a compositional bias: polar residues. Residues 669-1141 (KPILAPEPLV…EEIPTQKPDQ (473 aa)) form an interaction with SLFN12 region. Residues 674 to 1093 (PEPLVMDNLD…KMWKKVIEEE (420 aa)) form the PDEase domain. His-752 (proton donor) is an active-site residue. Residue His-752 coordinates AMP. 4 residues coordinate Mn(2+): His-756, His-836, Asp-837, and Asp-950. 3 residues coordinate AMP: Asp-837, Asp-950, and Gln-1001. Asp-837 serves as a coordination point for Mg(2+). Disordered stretches follow at residues 1023–1062 (PGKW…ESPK) and 1100–1141 (ENQS…KPDQ). A compositionally biased stretch (acidic residues) spans 1029-1056 (DSDESGDTDDPEEEEEEAPAPNEEETCE). Phosphoserine is present on Ser-1033. The residue at position 1036 (Thr-1036) is a Phosphothreonine. Over residues 1100-1113 (ENQSLDQTPQSHSS) the composition is skewed to polar residues. Lys-1120 is covalently cross-linked (Glycyl lysine isopeptide (Lys-Gly) (interchain with G-Cter in SUMO2)). Residues 1125 to 1141 (EKGKPRGEEIPTQKPDQ) are compositionally biased toward basic and acidic residues.

It belongs to the cyclic nucleotide phosphodiesterase family. PDE3 subfamily. As to quaternary structure, homodimer. Interacts with SLFN12; direct low affinity interaction which is stimulated by binding of 17beta-estradiol/E2 to PDE3A and that positively regulates the ribonuclease activity of SLFN12. The cofactor is Mn(2+). Requires Mg(2+) as cofactor.

It localises to the membrane. The protein resides in the cytoplasm. It is found in the cytosol. The catalysed reaction is a nucleoside 3',5'-cyclic phosphate + H2O = a nucleoside 5'-phosphate + H(+). It carries out the reaction 3',5'-cyclic AMP + H2O = AMP + H(+). The enzyme catalyses 3',5'-cyclic GMP + H2O = GMP + H(+). It catalyses the reaction 3',5'-cyclic UMP + H2O = UMP + H(+). Inhibited by cGMP. Inhibited by 17beta-estradiol. Inhibited by milrinone. Functionally, cyclic nucleotide phosphodiesterase with specificity for the second messengers cAMP and cGMP, which are key regulators of many important physiological processes. Also has activity toward cUMP. Independently of its catalytic activity it is part of an E2/17beta-estradiol-induced pro-apoptotic signaling pathway. E2 stabilizes the PDE3A/SLFN12 complex in the cytosol, promoting the dephosphorylation of SLFN12 and activating its pro-apoptotic ribosomal RNA/rRNA ribonuclease activity. This apoptotic pathway might be relevant in tissues with high concentration of E2 and be for instance involved in placenta remodeling. The sequence is that of cGMP-inhibited 3',5'-cyclic phosphodiesterase 3A from Homo sapiens (Human).